Here is a 45-residue protein sequence, read N- to C-terminus: U1-ctenitoxin-Pk1a (45 aa).

Disulfide bonds link cysteine 3-cysteine 16, cysteine 10-cysteine 25, cysteine 15-cysteine 34, and cysteine 27-cysteine 32.

In terms of tissue distribution, expressed by the venom gland.

The protein resides in the secreted. Functionally, neurotoxin. Causes rapid general flaccid paralysis and death in mice at dose levels of 5 ug per mouse. The polypeptide is U1-ctenitoxin-Pk1a (Phoneutria keyserlingi (Brazilian wandering spider)).